Reading from the N-terminus, the 96-residue chain is Large ribosomal subunit protein uL23 (96 aa).

This sequence belongs to the universal ribosomal protein uL23 family. As to quaternary structure, part of the 50S ribosomal subunit. Contacts protein L29, and trigger factor when it is bound to the ribosome.

Its function is as follows. One of the early assembly proteins it binds 23S rRNA. One of the proteins that surrounds the polypeptide exit tunnel on the outside of the ribosome. Forms the main docking site for trigger factor binding to the ribosome. The protein is Large ribosomal subunit protein uL23 of Syntrophus aciditrophicus (strain SB).